The sequence spans 158 residues: NAD(P)H-quinone oxidoreductase subunit J, chloroplastic (158 aa).

This sequence belongs to the complex I 30 kDa subunit family. NDH is composed of at least 16 different subunits, 5 of which are encoded in the nucleus.

The protein resides in the plastid. The protein localises to the chloroplast thylakoid membrane. The enzyme catalyses a plastoquinone + NADH + (n+1) H(+)(in) = a plastoquinol + NAD(+) + n H(+)(out). It carries out the reaction a plastoquinone + NADPH + (n+1) H(+)(in) = a plastoquinol + NADP(+) + n H(+)(out). Its function is as follows. NDH shuttles electrons from NAD(P)H:plastoquinone, via FMN and iron-sulfur (Fe-S) centers, to quinones in the photosynthetic chain and possibly in a chloroplast respiratory chain. The immediate electron acceptor for the enzyme in this species is believed to be plastoquinone. Couples the redox reaction to proton translocation, and thus conserves the redox energy in a proton gradient. In Draba nemorosa (Woodland whitlowgrass), this protein is NAD(P)H-quinone oxidoreductase subunit J, chloroplastic.